Here is a 45-residue protein sequence, read N- to C-terminus: Endo-1,4-beta-xylanase Xyn10A (45 aa).

The protein belongs to the glycosyl hydrolase 10 (cellulase F) family.

The protein localises to the secreted. The protein resides in the extracellular space. It catalyses the reaction Endohydrolysis of (1-&gt;4)-beta-D-xylosidic linkages in xylans.. The catalysed reaction is Endohydrolysis of (1-&gt;4)-beta-D-glucosidic linkages in cellulose, lichenin and cereal beta-D-glucans.. It functions in the pathway glycan degradation; xylan degradation. Its function is as follows. Has xylanase, avicelase and cellobiohydrolase activity. This Gloeophyllum trabeum (Brown rot fungus) protein is Endo-1,4-beta-xylanase Xyn10A.